A 466-amino-acid polypeptide reads, in one-letter code: Methylenetetrahydrofolate--tRNA-(uracil-5-)-methyltransferase TrmFO (466 aa).

Residue 14 to 19 coordinates FAD; that stretch reads GGGLAG.

Belongs to the MnmG family. TrmFO subfamily. It depends on FAD as a cofactor.

It localises to the cytoplasm. The enzyme catalyses uridine(54) in tRNA + (6R)-5,10-methylene-5,6,7,8-tetrahydrofolate + NADH + H(+) = 5-methyluridine(54) in tRNA + (6S)-5,6,7,8-tetrahydrofolate + NAD(+). It carries out the reaction uridine(54) in tRNA + (6R)-5,10-methylene-5,6,7,8-tetrahydrofolate + NADPH + H(+) = 5-methyluridine(54) in tRNA + (6S)-5,6,7,8-tetrahydrofolate + NADP(+). Its function is as follows. Catalyzes the folate-dependent formation of 5-methyl-uridine at position 54 (M-5-U54) in all tRNAs. The sequence is that of Methylenetetrahydrofolate--tRNA-(uracil-5-)-methyltransferase TrmFO from Brucella suis (strain ATCC 23445 / NCTC 10510).